Reading from the N-terminus, the 179-residue chain is UPF0227 protein Shewana3_2292 (179 aa).

It belongs to the UPF0227 family.

This is UPF0227 protein Shewana3_2292 from Shewanella sp. (strain ANA-3).